A 58-amino-acid polypeptide reads, in one-letter code: Small ribosomal subunit protein bS21 (58 aa).

It belongs to the bacterial ribosomal protein bS21 family.

The chain is Small ribosomal subunit protein bS21 from Picosynechococcus sp. (strain ATCC 27264 / PCC 7002 / PR-6) (Agmenellum quadruplicatum).